The following is a 36-amino-acid chain: Pancreatic polypeptide (36 aa).

The residue at position 36 (Phe-36) is a Phenylalanine amide.

This sequence belongs to the NPY family.

The protein localises to the secreted. In terms of biological role, hormone secreted by pancreatic cells that acts as a regulator of pancreatic and gastrointestinal functions. The polypeptide is Pancreatic polypeptide (ppy) (Aquarana catesbeiana (American bullfrog)).